The following is a 179-amino-acid chain: ATP synthase subunit delta (179 aa).

Belongs to the ATPase delta chain family. In terms of assembly, F-type ATPases have 2 components, F(1) - the catalytic core - and F(0) - the membrane proton channel. F(1) has five subunits: alpha(3), beta(3), gamma(1), delta(1), epsilon(1). F(0) has three main subunits: a(1), b(2) and c(10-14). The alpha and beta chains form an alternating ring which encloses part of the gamma chain. F(1) is attached to F(0) by a central stalk formed by the gamma and epsilon chains, while a peripheral stalk is formed by the delta and b chains.

It localises to the cell inner membrane. Its function is as follows. F(1)F(0) ATP synthase produces ATP from ADP in the presence of a proton or sodium gradient. F-type ATPases consist of two structural domains, F(1) containing the extramembraneous catalytic core and F(0) containing the membrane proton channel, linked together by a central stalk and a peripheral stalk. During catalysis, ATP synthesis in the catalytic domain of F(1) is coupled via a rotary mechanism of the central stalk subunits to proton translocation. Functionally, this protein is part of the stalk that links CF(0) to CF(1). It either transmits conformational changes from CF(0) to CF(1) or is implicated in proton conduction. The chain is ATP synthase subunit delta from Burkholderia mallei (strain NCTC 10247).